The sequence spans 160 residues: Endoribonuclease YbeY (160 aa).

Zn(2+) is bound by residues H125, H129, and H135.

Belongs to the endoribonuclease YbeY family. It depends on Zn(2+) as a cofactor.

It is found in the cytoplasm. Its function is as follows. Single strand-specific metallo-endoribonuclease involved in late-stage 70S ribosome quality control and in maturation of the 3' terminus of the 16S rRNA. The sequence is that of Endoribonuclease YbeY from Dehalococcoides mccartyi (strain ATCC BAA-2100 / JCM 16839 / KCTC 5957 / BAV1).